Consider the following 198-residue polypeptide: Nucleoid occlusion factor SlmA (198 aa).

The region spanning 10–70 (NRREEILQSL…SLIEFIEDSL (61 aa)) is the HTH tetR-type domain. Positions 33–52 (TTAKLAASVGVSEAALYRHF) form a DNA-binding region, H-T-H motif. A coiled-coil region spans residues 117–144 (EQDRLQGRINQLFERIEAQLRQVLREKR).

The protein belongs to the nucleoid occlusion factor SlmA family. In terms of assembly, homodimer. Interacts with FtsZ.

It localises to the cytoplasm. The protein resides in the nucleoid. Functionally, required for nucleoid occlusion (NO) phenomenon, which prevents Z-ring formation and cell division over the nucleoid. Acts as a DNA-associated cell division inhibitor that binds simultaneously chromosomal DNA and FtsZ, and disrupts the assembly of FtsZ polymers. SlmA-DNA-binding sequences (SBS) are dispersed on non-Ter regions of the chromosome, preventing FtsZ polymerization at these regions. In Salmonella dublin (strain CT_02021853), this protein is Nucleoid occlusion factor SlmA.